The primary structure comprises 408 residues: Aminoacylase-1 (408 aa).

Position 80 (histidine 80) interacts with Zn(2+). Residue aspartate 82 is part of the active site. Aspartate 113 provides a ligand contact to Zn(2+). The Proton acceptor role is filled by glutamate 147. Residues glutamate 148, glutamate 175, and histidine 373 each coordinate Zn(2+).

This sequence belongs to the peptidase M20A family. Homodimer. Interacts with SPHK1. Zn(2+) serves as cofactor.

It is found in the cytoplasm. The enzyme catalyses an N-acyl-L-amino acid + H2O = an L-alpha-amino acid + a carboxylate. It carries out the reaction N-acetyl-L-methionine + H2O = L-methionine + acetate. It catalyses the reaction N-acetyl-L-glutamine + H2O = L-glutamine + acetate. Catalyzes the hydrolysis of N-acetylated amino acids to acetate and free amino acids. The chain is Aminoacylase-1 (ACY1) from Pongo abelii (Sumatran orangutan).